The following is a 214-amino-acid chain: uncharacterized protein (214 aa).

In terms of domain architecture, AMMECR1 spans 1 to 194 (MVSANREMAV…MHYSEYLSYV (194 aa)).

This is an uncharacterized protein from Arabidopsis thaliana (Mouse-ear cress).